The chain runs to 158 residues: Regenerating islet-derived protein 4 (158 aa).

Positions 1–22 (MASRSMRLLLLLSCLAKTGVLG) are cleaved as a signal peptide. Cys30 and Cys41 form a disulfide bridge. Positions 37-155 (HKSNCYGYFR…CNKRQHFLCK (119 aa)) constitute a C-type lectin domain. N-linked (GlcNAc...) asparagine glycosylation is present at Asn50. Intrachain disulfides connect Cys58-Cys154 and Cys129-Cys146. A carbohydrate is bound by residues 98–103 (DPQKRQ) and 135–137 (NNN).

As to expression, highly expressed in the gastrointestinal tract including the duodenum, jejunum, ileum, ileocecum, appendix, descending colon, pancreas and small intestine. Weakly expressed in normal colon and stomach. Strongly expressed in most colorectal tumors than in normal colon. Preferentially expressed in mucinous tumors and in some cases neuro-endocrine tumors. Expressed in mucus-secreting cells and enterocyte-like cells. In small intestine expressed at the basal perinuclear zone of goblet cells.

The protein resides in the secreted. Calcium-independent lectin displaying mannose-binding specificity and able to maintain carbohydrate recognition activity in an acidic environment. May be involved in inflammatory and metaplastic responses of the gastrointestinal epithelium. The polypeptide is Regenerating islet-derived protein 4 (REG4) (Homo sapiens (Human)).